An 81-amino-acid chain; its full sequence is MSSGGLLLLLGLLTLWAELTPVSGRPGLCELPAETGPCKARIRAFYYNPHSHKCLEFTYGGCKGNANNFKTIDECNRTCVG.

The N-terminal stretch at 1–24 is a signal peptide; it reads MSSGGLLLLLGLLTLWAELTPVSG. Residues 29-79 enclose the BPTI/Kunitz inhibitor domain; it reads CELPAETGPCKARIRAFYYNPHSHKCLEFTYGGCKGNANNFKTIDECNRTC. 3 disulfide bridges follow: C29–C79, C38–C62, and C54–C75.

As to expression, expressed by the venom gland.

The protein resides in the secreted. Snake venom serine protease inhibitor. This is Protease inhibitor 1 from Walterinnesia aegyptia (Desert black snake).